The chain runs to 469 residues: UDP-N-acetylmuramate--L-alanine ligase (469 aa).

122–128 (GTHGKTT) serves as a coordination point for ATP.

The protein belongs to the MurCDEF family.

The protein resides in the cytoplasm. The catalysed reaction is UDP-N-acetyl-alpha-D-muramate + L-alanine + ATP = UDP-N-acetyl-alpha-D-muramoyl-L-alanine + ADP + phosphate + H(+). It participates in cell wall biogenesis; peptidoglycan biosynthesis. Functionally, cell wall formation. This chain is UDP-N-acetylmuramate--L-alanine ligase, found in Legionella pneumophila (strain Paris).